Here is a 99-residue protein sequence, read N- to C-terminus: ATP-dependent Clp protease adapter protein ClpS (99 aa).

The protein belongs to the ClpS family. As to quaternary structure, binds to the N-terminal domain of the chaperone ClpA.

Its function is as follows. Involved in the modulation of the specificity of the ClpAP-mediated ATP-dependent protein degradation. In Helicobacter hepaticus (strain ATCC 51449 / 3B1), this protein is ATP-dependent Clp protease adapter protein ClpS.